The chain runs to 332 residues: L-lactate dehydrogenase A chain (332 aa).

NAD(+)-binding positions include G29–K57 and R99. Substrate is bound by residues R106, N138, and R169. N138 is a binding site for NAD(+). Residue H193 is the Proton acceptor of the active site. T248 serves as a coordination point for substrate.

This sequence belongs to the LDH/MDH superfamily. LDH family. Homotetramer.

It localises to the cytoplasm. The catalysed reaction is (S)-lactate + NAD(+) = pyruvate + NADH + H(+). Its pathway is fermentation; pyruvate fermentation to lactate; (S)-lactate from pyruvate: step 1/1. In terms of biological role, interconverts simultaneously and stereospecifically pyruvate and lactate with concomitant interconversion of NADH and NAD(+). In Pelodiscus sinensis japonicus (Chinese soft-shelled turtle), this protein is L-lactate dehydrogenase A chain (LDHA).